A 179-amino-acid polypeptide reads, in one-letter code: Orotate phosphoribosyltransferase (179 aa).

Residues Arg94, Lys95, Lys98, His100, and 120–128 (EDTSTTGNS) each bind 5-phospho-alpha-D-ribose 1-diphosphate. The orotate site is built by Thr124 and Arg152.

Belongs to the purine/pyrimidine phosphoribosyltransferase family. PyrE subfamily. As to quaternary structure, homodimer. Mg(2+) is required as a cofactor.

The enzyme catalyses orotidine 5'-phosphate + diphosphate = orotate + 5-phospho-alpha-D-ribose 1-diphosphate. Its pathway is pyrimidine metabolism; UMP biosynthesis via de novo pathway; UMP from orotate: step 1/2. Its function is as follows. Catalyzes the transfer of a ribosyl phosphate group from 5-phosphoribose 1-diphosphate to orotate, leading to the formation of orotidine monophosphate (OMP). The protein is Orotate phosphoribosyltransferase of Mycobacterium bovis (strain ATCC BAA-935 / AF2122/97).